The chain runs to 749 residues: Tryptophan 2-monooxygenase (749 aa).

Residues Ser-232, Glu-252, Lys-260, and Arg-280 each contribute to the FMN site. Substrate is bound at residue Arg-280.

It belongs to the tryptophan 2-monooxygenase family. Requires FMN as cofactor.

It carries out the reaction L-tryptophan + O2 = indole-3-acetamide + CO2 + H2O. It functions in the pathway plant hormone metabolism; auxin biosynthesis. The polypeptide is Tryptophan 2-monooxygenase (aux1) (Rhizobium rhizogenes (Agrobacterium rhizogenes)).